Consider the following 76-residue polypeptide: Exodeoxyribonuclease 7 small subunit (76 aa).

This sequence belongs to the XseB family. In terms of assembly, heterooligomer composed of large and small subunits.

It is found in the cytoplasm. The enzyme catalyses Exonucleolytic cleavage in either 5'- to 3'- or 3'- to 5'-direction to yield nucleoside 5'-phosphates.. In terms of biological role, bidirectionally degrades single-stranded DNA into large acid-insoluble oligonucleotides, which are then degraded further into small acid-soluble oligonucleotides. The polypeptide is Exodeoxyribonuclease 7 small subunit (Bacillus cereus (strain G9842)).